An 886-amino-acid chain; its full sequence is MAVACAAPGSTFSKQLLFFLLVLVLFCDACQKVSLHVPSHLKAETPVGKVNLEECLKSPSLILSSDPAFRILEDGTIYTTHDLLLSSEKRGFSILLSDGQGQEQKKLEVVLSAREKKVFRKRHTKEPVHNRSKRRWAPIPCSLMENSLGPFPQHIQQIQSDAAQNYTIFYSISGPGVDKEPYNLFYIEKDTGDIYCTRSIDREQYDQFLVYGYATTADGYAPDYPLPLLFKVEDDNDNAPYFETKLTVFSVPENCRSGTSVGQVTAIDKDEPGTLHTRLKYKILQQIPDQPKHFSIHPDTGVITTTTPLLDREKCDTYKLVMEVRDMGGQPFGLFTTGTITISLEDENDNSPYFTQTSYTTEVEENRIDVEILRMVVHDQDLPNTPHSKAVYTILKGNENGNFKITTDPNTNEGVLCVVKPLNYEVSRQVTLQIGVLNEAQFTNAANAQPPTMCTTTVTVKIKDRDEGPECQPPVKVIQSKDGLPAGQELLGYKAVDPETSSGEGLRYEMVGDEDNWFEINKITGDLRTVKVLDRESKFVKNNQYNISVVATDTAGRSCTGTLVVLLEDFNDHPPQIDKEVTICQQEKDFAVLEPIDLDGPDNGPPFQFLLDNSSSKLWTLESQDGKRAILRQRHNLNYNYYSVPIQIQDRHGFSAKHVLSVRVCDCTTPTECRMAVKEERDAKPNIILGKWAILAMVLGSALLLCILFTCFCVTTTKRTVKKCFPDDVAQQNLIVSNTEGPGEEVTEANIRLPTQTANICDTSMSVGTLGGQGIKTQQSFEMVKGGHTLESHKGGVLGAAEPGRYAYTDWQTFTQPRLGEKVYLCGQAEEHKHCEDYVRPYNYEGKGSMAGSVGCCSDRQEEEGLEFLDQLEPKFRTLAKTCVKK.

A signal peptide spans 1-29 (MAVACAAPGSTFSKQLLFFLLVLVLFCDA). Positions 30 to 134 (CQKVSLHVPS…KEPVHNRSKR (105 aa)) are excised as a propeptide. N-linked (GlcNAc...) asparagine glycans are attached at residues Asn-130 and Asn-165. 5 Cadherin domains span residues 135 to 242 (RWAP…APYF), 243 to 354 (ETKL…SPYF), 355 to 471 (TQTS…GPEC), 472 to 575 (QPPV…DHPP), and 576 to 682 (QIDK…EERD). Topologically, residues 135–691 (RWAPIPCSLM…DAKPNIILGK (557 aa)) are extracellular. Thr-385 bears the Phosphothreonine mark. Residue Asn-546 is glycosylated (N-linked (GlcNAc...) (high mannose) asparagine). An N-linked (GlcNAc...) asparagine glycan is attached at Asn-613. A helical membrane pass occupies residues 692–714 (WAILAMVLGSALLLCILFTCFCV). Over 715-886 (TTTKRTVKKC…RTLAKTCVKK (172 aa)) the chain is Cytoplasmic.

As to quaternary structure, binds to JUP/plakoglobin. As to expression, expressed in the epidermis and inner root sheaths of hair follicles (at protein level).

It localises to the cell membrane. It is found in the cell junction. The protein resides in the desmosome. Its function is as follows. A component of desmosome cell-cell junctions which are required for positive regulation of cellular adhesion. Required for desmosome adhesion strength between the granular layers of the epidermis, as a result moderates epidermal proliferation and differentiation. Is therefore required to maintain postnatal epidermal barrier function and normal hair follicle morphology into adulthood. This chain is Desmocollin-1 (Dsc1), found in Mus musculus (Mouse).